The following is a 110-amino-acid chain: Large ribosomal subunit protein uL22 (110 aa).

It belongs to the universal ribosomal protein uL22 family. In terms of assembly, part of the 50S ribosomal subunit.

Its function is as follows. This protein binds specifically to 23S rRNA; its binding is stimulated by other ribosomal proteins, e.g. L4, L17, and L20. It is important during the early stages of 50S assembly. It makes multiple contacts with different domains of the 23S rRNA in the assembled 50S subunit and ribosome. The globular domain of the protein is located near the polypeptide exit tunnel on the outside of the subunit, while an extended beta-hairpin is found that lines the wall of the exit tunnel in the center of the 70S ribosome. In Leptospira borgpetersenii serovar Hardjo-bovis (strain JB197), this protein is Large ribosomal subunit protein uL22.